Consider the following 200-residue polypeptide: MCNSFRIGVLGLQGAISEHVNRLKELEQQPVVVKKSTDLHQLDGLIIPGGESTAIWKLIEENKLYEPIQNFANEGKAIFGTCAGLVLLSKTTIGRDYTPTLKLMDITVQRNGFGRQKDSFEATIQAKYMDDSYHAVFIRAPYIESVGEGVEVIASYNDKIVAARQKNVLVCAFHPELTDDDRFLEMFLTMISSNKNFNHV.

50-52 (GES) provides a ligand contact to L-glutamine. The active-site Nucleophile is Cys-82. L-glutamine is bound by residues Arg-110 and 138–139 (IR). Residues His-174 and Glu-176 each act as charge relay system in the active site.

It belongs to the glutaminase PdxT/SNO family. As to quaternary structure, in the presence of PdxS, forms a dodecamer of heterodimers. Only shows activity in the heterodimer.

The catalysed reaction is aldehydo-D-ribose 5-phosphate + D-glyceraldehyde 3-phosphate + L-glutamine = pyridoxal 5'-phosphate + L-glutamate + phosphate + 3 H2O + H(+). It catalyses the reaction L-glutamine + H2O = L-glutamate + NH4(+). It participates in cofactor biosynthesis; pyridoxal 5'-phosphate biosynthesis. Functionally, catalyzes the hydrolysis of glutamine to glutamate and ammonia as part of the biosynthesis of pyridoxal 5'-phosphate. The resulting ammonia molecule is channeled to the active site of PdxS. The sequence is that of Pyridoxal 5'-phosphate synthase subunit PdxT from Oceanobacillus iheyensis (strain DSM 14371 / CIP 107618 / JCM 11309 / KCTC 3954 / HTE831).